The primary structure comprises 485 residues: ATP synthase subunit beta (485 aa).

Residues 1-11 are compositionally biased toward basic and acidic residues; it reads MPATETADKNT. Residues 1 to 20 are disordered; sequence MPATETADKNTKSANSDTSG. 170 to 177 is a binding site for ATP; that stretch reads GGAGVGKT.

The protein belongs to the ATPase alpha/beta chains family. As to quaternary structure, F-type ATPases have 2 components, CF(1) - the catalytic core - and CF(0) - the membrane proton channel. CF(1) has five subunits: alpha(3), beta(3), gamma(1), delta(1), epsilon(1). CF(0) has three main subunits: a(1), b(2) and c(9-12). The alpha and beta chains form an alternating ring which encloses part of the gamma chain. CF(1) is attached to CF(0) by a central stalk formed by the gamma and epsilon chains, while a peripheral stalk is formed by the delta and b chains.

The protein localises to the cell membrane. It carries out the reaction ATP + H2O + 4 H(+)(in) = ADP + phosphate + 5 H(+)(out). Produces ATP from ADP in the presence of a proton gradient across the membrane. The catalytic sites are hosted primarily by the beta subunits. The polypeptide is ATP synthase subunit beta (Mycolicibacterium paratuberculosis (strain ATCC BAA-968 / K-10) (Mycobacterium paratuberculosis)).